A 205-amino-acid polypeptide reads, in one-letter code: MPCSTEAMEKAGHGHASTPRKRSLSNSSFRLRSESLNTLRLRRIFDLFDKNSDGIITVDELSRALNLLGLETDLSELESTVKSFTREGNIGLQFEDFISLHQSLNDSYFAYGGEDEDDNEEDMRKSILSQEEADSFGGFKVFDEDGDGYISARELQMVLGKLGFSEGSEIDRVEKMIVSVDSNRDGRVDFFEFKDMMRSVLVRSS.

The segment at 1–26 (MPCSTEAMEKAGHGHASTPRKRSLSN) is disordered. 4 EF-hand domains span residues 36–71 (LNTL…LGLE), 72–107 (TDLS…LNDS), 130–165 (QEEA…LGFS), and 168–203 (SEID…VLVR). Positions 49, 51, 53, and 60 each coordinate Ca(2+). D143, D145, D147, Y149, E154, D181, N183, D185, R187, and E192 together coordinate Ca(2+).

Its function is as follows. Could be involved in calcium metabolism in pollen. Binds 3 calcium ions. The chain is Calcium-binding allergen Bet v 3 (BETVIII) from Betula pendula (European white birch).